A 512-amino-acid chain; its full sequence is MAAKTVQYDNIYLNLSEKPGKLRIAPSGLGWKSPSLAEPFTLPISEIRRFCWSRFARGYELKIILKSKDPVSLDGFSQEDLDDLINVIKQNFDMGIEQKEFSIKGWNWGEANFLGSELVFDVNSRPAFEIPISAVTNTNLSGKNEVALEFSTTDDKQIPSAQVDELVEMRLYVPGTTAKEDAADGEEVEQNAANLFYESLKERADIGQAAGDAIVSFSEILLLTPRGRYDIDMYETCMRLRGKTYDYKVEYSSINSLFLLPKPDEQHVVFVIGLEPPLRQGQTRYPFLVTQFVRDEDMEVDLNIEETVLKEKYADKVKASYDQPAFEVVSQIFRGLTGRKVTTPAEFLSHEGHAAVKCSYKANEGQLYCLDKSFLFIPKPTLLMNTSDITRVTLSRVGMSVSAARTFDLTFTLRSGTSYQFSNINRVEQSALVAFLESKQIKIHNDLADETQQTLLTSALDDEDEEGDEEMEEALSEDEDFQAESESDVAEEYDENAESSDEEGASGAEGSE.

Over residues 460-504 (LDDEDEEGDEEMEEALSEDEDFQAESESDVAEEYDENAESSDEEG) the composition is skewed to acidic residues. Residues 460–512 (LDDEDEEGDEEMEEALSEDEDFQAESESDVAEEYDENAESSDEEGASGAEGSE) are disordered.

It belongs to the SSRP1 family. As to quaternary structure, forms a stable heterodimer with spt16. The spt16-pob3 dimer weakly associates with multiple molecules of nhp6 to form the FACT complex. Interacts with abo1.

It localises to the nucleus. The protein localises to the chromosome. Functionally, component of the FACT complex, a general chromatin factor that acts to reorganize nucleosomes. The FACT complex is involved in multiple processes that require DNA as a template such as mRNA elongation, DNA replication and DNA repair. During transcription elongation the FACT complex acts as a histone chaperone that both destabilizes and restores nucleosomal structure. It facilitates the passage of RNA polymerase II and transcription by promoting the dissociation of one histone H2A-H2B dimer from the nucleosome, then subsequently promotes the reestablishment of the nucleosome following the passage of RNA polymerase II. This Schizosaccharomyces pombe (strain 972 / ATCC 24843) (Fission yeast) protein is FACT complex subunit pob3.